A 79-amino-acid polypeptide reads, in one-letter code: MDTKQAVLDILNELTGEDLSDQMDENIFENGLLDSMATVQMLLELQDKCDVTAPVSEFHREDWDTPNKIIAKVESLRNE.

Residues 1-77 (MDTKQAVLDI…KIIAKVESLR (77 aa)) form the Carrier domain. An O-(pantetheine 4'-phosphoryl)serine modification is found at S35.

Belongs to the DltC family. Post-translationally, 4'-phosphopantetheine is transferred from CoA to a specific serine of apo-DCP.

The protein localises to the cytoplasm. Its pathway is cell wall biogenesis; lipoteichoic acid biosynthesis. Its function is as follows. Carrier protein involved in the D-alanylation of lipoteichoic acid (LTA). The loading of thioester-linked D-alanine onto DltC is catalyzed by D-alanine--D-alanyl carrier protein ligase DltA. The DltC-carried D-alanyl group is further transferred to cell membrane phosphatidylglycerol (PG) by forming an ester bond, probably catalyzed by DltD. D-alanylation of LTA plays an important role in modulating the properties of the cell wall in Gram-positive bacteria, influencing the net charge of the cell wall. In Lactobacillus johnsonii (strain CNCM I-12250 / La1 / NCC 533), this protein is D-alanyl carrier protein.